The primary structure comprises 147 residues: UPF0306 protein KPK_0562 (147 aa).

The protein belongs to the UPF0306 family.

This is UPF0306 protein KPK_0562 from Klebsiella pneumoniae (strain 342).